Here is a 2748-residue protein sequence, read N- to C-terminus: Nuclear migration protein NUM1 (2748 aa).

The span at 1–10 shows a compositional bias: basic residues; that stretch reads MSHNNRHKKN. 2 disordered regions span residues 1-36 and 290-312; these read MSHN…VSTN and YYQK…GTTS. Over residues 17–36 the composition is skewed to polar residues; that stretch reads AGQYANSIDNSLSQESVSTN. The segment covering 293 to 304 has biased composition (low complexity); it reads KQHTSDTTVTSD. 12 tandem repeats follow at residues 593-656, 657-727, 728-798, 799-862, 863-926, 927-990, 991-1054, 1055-1118, 1119-1182, 1183-1246, 1247-1310, and 1311-1374. A 13 X tandem repeats region spans residues 593–1384; sequence PSLEYLVEHA…PSLEYLVKHA (792 aa). Phosphoserine occurs at positions 611, 675, and 746. Serine 881, serine 945, and serine 1009 each carry phosphoserine. A phosphoserine mark is found at serine 1201, serine 1265, and serine 1329. The 13; truncated repeat unit spans residues 1375–1384; sequence PSLEYLVKHA. Residues 2111–2133 are disordered; it reads ERAERIDEQSINTTSSNSTTTSS. Residues 2122–2133 are compositionally biased toward low complexity; the sequence is NTTSSNSTTTSS. Residues serine 2162, serine 2164, serine 2197, serine 2217, serine 2220, serine 2221, serine 2360, and serine 2424 each carry the phosphoserine modification. The segment covering 2444–2460 has biased composition (basic and acidic residues); the sequence is KEDKKGQATASKHEYVS. A disordered region spans residues 2444–2536; that stretch reads KEDKKGQATA…HSSRNTPASR (93 aa). The span at 2465 to 2474 shows a compositional bias: polar residues; sequence NKTSTVSTKS. Positions 2492 to 2503 are enriched in basic and acidic residues; that stretch reads SESHPQIEEQSH. Phosphoserine is present on serine 2494. Over residues 2504 to 2514 the composition is skewed to basic residues; sequence RTNHHKHHKRQ. Residues 2516–2532 show a composition bias toward low complexity; sequence SLNSNSTSKTTHSSRNT. Serine 2545 carries the phosphoserine modification. The PH domain occupies 2573 to 2683; sequence QTVIGEYLFK…WYNSLRYLLQ (111 aa). Residues 2707–2748 are disordered; sequence IFPLPGENTKSSSKRLSASRRSVSTRSLRHRVPQSRSFGNLR. The span at 2720-2730 shows a compositional bias: low complexity; it reads KRLSASRRSVS.

As to quaternary structure, interacts with PAC11 when DYN1 is present, and TUB3.

It localises to the bud tip. Its function is as follows. Controls nuclear migration. NUM1 specifically controls the interaction of the bud neck cytoskeleton with the pre-divisional G2 nucleus. Functions in dynein-anchoring. During late anaphase forms dynein-interacting cortical microtubule capture sites at both cellular poles. This leads to dynein-dependent sliding of the microtubules in the bud. This is Nuclear migration protein NUM1 (NUM1) from Saccharomyces cerevisiae (strain ATCC 204508 / S288c) (Baker's yeast).